A 218-amino-acid chain; its full sequence is uncharacterized protein (218 aa).

Over residues 184–202 (MDREEKRKEKEEKRKRELA) the composition is skewed to basic and acidic residues. Positions 184-218 (MDREEKRKEKEEKRKRELAARQLKRQEKKKQKTSK) are disordered. Basic residues predominate over residues 205–218 (QLKRQEKKKQKTSK).

This is an uncharacterized protein from Mycoplasma pneumoniae (strain ATCC 29342 / M129 / Subtype 1) (Mycoplasmoides pneumoniae).